The following is a 231-amino-acid chain: 2,3-bisphosphoglycerate-dependent phosphoglycerate mutase (231 aa).

Residues 10-17 (RHGQSEWN), 23-24 (TG), Arg62, 89-92 (ERHY), Lys100, 116-117 (RR), and 185-186 (GN) each bind substrate. His11 acts as the Tele-phosphohistidine intermediate in catalysis. The Proton donor/acceptor role is filled by Glu89.

The protein belongs to the phosphoglycerate mutase family. BPG-dependent PGAM subfamily. Homodimer.

It catalyses the reaction (2R)-2-phosphoglycerate = (2R)-3-phosphoglycerate. Its pathway is carbohydrate degradation; glycolysis; pyruvate from D-glyceraldehyde 3-phosphate: step 3/5. Catalyzes the interconversion of 2-phosphoglycerate and 3-phosphoglycerate. In Buchnera aphidicola subsp. Acyrthosiphon pisum (strain 5A), this protein is 2,3-bisphosphoglycerate-dependent phosphoglycerate mutase.